The following is a 464-amino-acid chain: Argininosuccinate lyase (464 aa).

The protein belongs to the lyase 1 family. Argininosuccinate lyase subfamily.

It localises to the cytoplasm. The catalysed reaction is 2-(N(omega)-L-arginino)succinate = fumarate + L-arginine. The protein operates within amino-acid biosynthesis; L-arginine biosynthesis; L-arginine from L-ornithine and carbamoyl phosphate: step 3/3. This chain is Argininosuccinate lyase, found in Azotobacter vinelandii (strain DJ / ATCC BAA-1303).